Here is a 177-residue protein sequence, read N- to C-terminus: Acireductone dioxygenase (177 aa).

Residues His99, His101, Glu105, and His143 each contribute to the Fe(2+) site. 4 residues coordinate Ni(2+): His99, His101, Glu105, and His143.

It belongs to the acireductone dioxygenase (ARD) family. As to quaternary structure, monomer. Fe(2+) is required as a cofactor. The cofactor is Ni(2+).

It catalyses the reaction 1,2-dihydroxy-5-(methylsulfanyl)pent-1-en-3-one + O2 = 3-(methylsulfanyl)propanoate + CO + formate + 2 H(+). It carries out the reaction 1,2-dihydroxy-5-(methylsulfanyl)pent-1-en-3-one + O2 = 4-methylsulfanyl-2-oxobutanoate + formate + 2 H(+). It functions in the pathway amino-acid biosynthesis; L-methionine biosynthesis via salvage pathway; L-methionine from S-methyl-5-thio-alpha-D-ribose 1-phosphate: step 5/6. Catalyzes 2 different reactions between oxygen and the acireductone 1,2-dihydroxy-3-keto-5-methylthiopentene (DHK-MTPene) depending upon the metal bound in the active site. Fe-containing acireductone dioxygenase (Fe-ARD) produces formate and 2-keto-4-methylthiobutyrate (KMTB), the alpha-ketoacid precursor of methionine in the methionine recycle pathway. Ni-containing acireductone dioxygenase (Ni-ARD) produces methylthiopropionate, carbon monoxide and formate, and does not lie on the methionine recycle pathway. This is Acireductone dioxygenase from Leptospira borgpetersenii serovar Hardjo-bovis (strain L550).